The sequence spans 122 residues: Insulin-like 3 (122 aa).

The first 15 residues, 1-15 (MRAPLLLMLLALGSA), serve as a signal peptide directing secretion. Disulfide bonds link Cys-29/Cys-107, Cys-41/Cys-120, and Cys-106/Cys-111.

This sequence belongs to the insulin family. As to quaternary structure, heterodimer of a B chain and an A chain linked by two disulfide bonds. As to expression, expressed exclusively in Leydig cells of the testis.

The protein resides in the secreted. Seems to play a role in testicular function. May be a trophic hormone with a role in testicular descent in fetal life. Is a ligand for LGR8 receptor. In Mus musculus (Mouse), this protein is Insulin-like 3 (Insl3).